The sequence spans 225 residues: Cytidylate kinase (225 aa).

11–19 (GPAGAGKGT) lines the ATP pocket. Over residues 169 to 185 (MDRIKSRIEERDARDQS) the composition is skewed to basic and acidic residues. Residues 169–195 (MDRIKSRIEERDARDQSRATAPLAAAP) are disordered.

It belongs to the cytidylate kinase family. Type 1 subfamily.

It localises to the cytoplasm. It catalyses the reaction CMP + ATP = CDP + ADP. The enzyme catalyses dCMP + ATP = dCDP + ADP. The polypeptide is Cytidylate kinase (Magnetococcus marinus (strain ATCC BAA-1437 / JCM 17883 / MC-1)).